Here is a 475-residue protein sequence, read N- to C-terminus: Putative response regulator NtrX-like (475 aa).

The region spanning 5–121 (DVLIVDDEES…KLVILLKRAC (117 aa)) is the Response regulatory domain. Asp54 is modified (4-aspartylphosphate). Positions 143–369 (LVGGCSVTLK…LRNVVEWTLI (227 aa)) constitute a Sigma-54 factor interaction domain. ATP-binding positions include 171-178 (GKVGSGKE) and 232-241 (ANNGTLYIDE).

Functionally, member of the two-component regulatory system RF_0895/RF_0427. The polypeptide is Putative response regulator NtrX-like (Rickettsia felis (strain ATCC VR-1525 / URRWXCal2) (Rickettsia azadi)).